A 459-amino-acid chain; its full sequence is DNA primase large subunit (459 aa).

[4Fe-4S] cluster-binding residues include C291, C369, C386, and C428.

It belongs to the eukaryotic-type primase large subunit family. In terms of assembly, heterodimer of a catalytic subunit spp1/pri1 and a regulatory subunit spp2/pri2, also known as the DNA primase complex. Component of the alpha DNA polymerase complex (also known as the alpha DNA polymerase-primase complex) consisting of four subunits: the catalytic subunit pol1, the accessory subunit spb70/pol12, and the primase complex subunits spp1/pri1 and spp2/pri2 respectively. Interacts with orc2; preferentially associates with the unphosphorylated orc2 in G1 pre-Start prior to orc2 being phosphorylated by cdc2, the interaction is mediated by spb70 and might enable the association of the whole alpha DNA polymerase complex to orc2/spb70 complex on chromatin. The cofactor is [4Fe-4S] cluster.

Its subcellular location is the nucleus. The protein localises to the chromosome. Its function is as follows. Regulatory subunit of the DNA primase complex and component of the DNA polymerase alpha complex (also known as the alpha DNA polymerase-primase complex - primosome/replisome) which play an essential role in the initiation of DNA synthesis. During the S phase of the cell cycle, the DNA polymerase alpha complex (composed of a catalytic subunit pol1, an accessory subunit spb70/pol12 and two primase subunits, the catalytic subunit spp1/pri1 and the regulatory subunit spp2/pri2) is recruited to DNA at the replicative forks. The primase subunit of the polymerase alpha complex initiates DNA synthesis by oligomerising short RNA primers on both leading and lagging strands. The sequence is that of DNA primase large subunit from Schizosaccharomyces pombe (strain 972 / ATCC 24843) (Fission yeast).